A 739-amino-acid polypeptide reads, in one-letter code: Eukaryotic translation initiation factor 3 subunit B (739 aa).

A sufficient for interaction with HCR1 and TIF32 region spans residues 1–98; that stretch reads MSINEEDYLQ…LFIQFKSTES (98 aa). The segment at 1-224 is sufficient for interaction with PIC8; sequence MSINEEDYLQ…GIQSWGGANF (224 aa). The region spanning 37–124 is the RRM domain; sequence NYIIVDGAPI…HRLLVNKLSD (88 aa). WD repeat units lie at residues 190 to 229, 231 to 293, 301 to 339, 343 to 385, 453 to 502, 537 to 579, and 592 to 630; these read PRKG…SIKR, FHQQ…RTFA, QKEM…QLLD, VKVD…QTAR, ELKD…KGGV, IENK…ETNK, and DKFS…YEFT.

The protein belongs to the eIF-3 subunit B family. In terms of assembly, component of the eukaryotic translation initiation factor 3 (eIF-3) complex.

Its subcellular location is the cytoplasm. In terms of biological role, RNA-binding component of the eukaryotic translation initiation factor 3 (eIF-3) complex, which is involved in protein synthesis of a specialized repertoire of mRNAs and, together with other initiation factors, stimulates binding of mRNA and methionyl-tRNAi to the 40S ribosome. The eIF-3 complex specifically targets and initiates translation of a subset of mRNAs involved in cell proliferation. This is Eukaryotic translation initiation factor 3 subunit B from Candida albicans (strain SC5314 / ATCC MYA-2876) (Yeast).